The following is a 363-amino-acid chain: Homeobox protein Hox-A2a (363 aa).

Disordered regions lie at residues 30–88 (DSFQ…LPPE), 98–117 (SKRN…GPVC), 189–220 (RMKH…SDEE), and 268–308 (DKNL…LDVS). The segment covering 31–44 (SFQSSSIKSSTLSR) has biased composition (polar residues). Residues 88–93 (EYPWMR) carry the Antp-type hexapeptide motif. Polar residues predominate over residues 103 to 113 (LPNSTTTTISN). Residues 137 to 196 (SRRLRTAYTNTQLLELEKEFHFNKYLCRPRRVEIAALLDLTERQVKVWFQNRRMKHKRQT) constitute a DNA-binding region (homeobox).

Belongs to the Antp homeobox family. Proboscipedia subfamily.

The protein resides in the nucleus. In terms of biological role, sequence-specific transcription factor which is part of a developmental regulatory system that provides cells with specific positional identities on the anterior-posterior axis. The chain is Homeobox protein Hox-A2a (hoxa2a) from Takifugu rubripes (Japanese pufferfish).